A 617-amino-acid chain; its full sequence is Cell pattern formation-associated protein STUA (617 aa).

A disordered region spans residues 1 to 79 (MNQPAADMYY…PASQMGQNVL (79 aa)). Residues 24-34 (TVTSGAMSYHS) show a composition bias toward polar residues. Residues 45–58 (PQYAPQPQYSQYGY) are compositionally biased toward low complexity. Positions 61-76 (GLTSPQSAQPASQMGQ) are enriched in polar residues. In terms of domain architecture, HTH APSES-type spans 106–212 (RVTATLWEDE…HNIGALLYHP (107 aa)). A DNA-binding region (H-T-H motif) is located at residues 140-161 (GTKLLNVAGMTRGRRDGILKSE). Disordered regions lie at residues 223–274 (AAAE…MGRP), 300–451 (SDSG…DSGA), and 463–617 (APAV…PRRR). Composition is skewed to low complexity over residues 305-318 (QWAQ…AQGA) and 334-345 (PATPASTPPGTT). Polar residues-rich tracts occupy residues 346–361 (IQNM…QYDN) and 368–382 (PSAQ…NPAS). Positions 438 to 447 (EHDHDAEYTH) are enriched in basic and acidic residues. Low complexity predominate over residues 488–509 (PASGRATPRTAAAPQPYYSQQA). Composition is skewed to polar residues over residues 519 to 533 (QQPS…SNDR) and 553 to 563 (SMSNGYASQMN). The interval 569–593 (KRGRDEDDDLQRPSSGGGMDLKRRK) is nuclear localization domain. Residues 599–617 (QVPAMAYAPPVMAQQPRRR) show a composition bias toward low complexity.

The protein belongs to the EFG1/PHD1/stuA family.

Its subcellular location is the nucleus. In terms of biological role, transcription factor that regulates asexual reproduction. Binds the StuA-response elements (StRE) with the consensus sequence 5'-(A/T)CGCG(T/A)N(A/C)-3' at the promoters of target genes. Required for the formation of aerial hyphae, efficient conidiation, and the formation of perithecia. Essential for the generation of normal turgor pressure within the appressorium. Required for infection of intact apple fruit and penetration of onion epidermal cells. The chain is Cell pattern formation-associated protein STUA from Colletotrichum gloeosporioides (Anthracnose fungus).